The chain runs to 483 residues: Serine/threonine-protein phosphatase 2A regulatory subunit phr2AB (483 aa).

2 WD repeats span residues 22–61 (SDAN…QSSK) and 88–129 (EIEE…IKQV). The segment at 132–152 (SATTTGPSYNGSLASNNTRSP) is disordered. WD repeat units lie at residues 206–244 (AHAY…ECFN), 255–295 (DLTE…LCDN), 314–352 (EIIS…KPVK), and 369–410 (ENDC…DVCL). A disordered region spans residues 421–443 (TKTLTTKMKLRSSKKEPKKPEDI). A compositionally biased stretch (basic and acidic residues) spans 433 to 443 (SKKEPKKPEDI). One copy of the WD 7 repeat lies at 449–483 (EYTKKTLHCAWHPKDNLIAVGAANTVYLYAATENK).

Belongs to the phosphatase 2A regulatory subunit B family. PP2A consists of a trimeric holoenzyme, composed of a 37 kDa catalytic subunit (C subunit) and a 65 kDa constant regulatory subunit (A subunit), that associates with a variety of regulatory subunits (B subunit) such as phr2AB (B55) and psrA (B56 homolog). The trimer may partially dissociates into a core 'AC' dimer equally active compared to the trimer.

The protein resides in the cytoplasm. It is found in the cytosol. It localises to the cytoskeleton. The protein localises to the microtubule organizing center. Its subcellular location is the centrosome. In terms of biological role, the B regulatory subunit might modulate substrate selectivity and catalytic activity, and might also direct the localization of the catalytic enzyme to a particular subcellular compartment. This Dictyostelium discoideum (Social amoeba) protein is Serine/threonine-protein phosphatase 2A regulatory subunit phr2AB (phr2aB).